The following is a 434-amino-acid chain: Putative D-alanyl-D-alanine carboxypeptidase (434 aa).

A helical; Signal-anchor transmembrane segment spans residues 7–25; that stretch reads YLSLLAVSCSVSAAKYPVL.

Belongs to the peptidase S12 family. YfeW subfamily.

Its subcellular location is the cell inner membrane. It carries out the reaction Preferential cleavage: (Ac)2-L-Lys-D-Ala-|-D-Ala. Also transpeptidation of peptidyl-alanyl moieties that are N-acyl substituents of D-alanine.. The sequence is that of Putative D-alanyl-D-alanine carboxypeptidase from Escherichia coli O157:H7.